Consider the following 183-residue polypeptide: ATP synthase subunit delta (183 aa).

The protein belongs to the ATPase delta chain family. F-type ATPases have 2 components, F(1) - the catalytic core - and F(0) - the membrane proton channel. F(1) has five subunits: alpha(3), beta(3), gamma(1), delta(1), epsilon(1). F(0) has three main subunits: a(1), b(2) and c(10-14). The alpha and beta chains form an alternating ring which encloses part of the gamma chain. F(1) is attached to F(0) by a central stalk formed by the gamma and epsilon chains, while a peripheral stalk is formed by the delta and b chains.

Its subcellular location is the cell inner membrane. Functionally, f(1)F(0) ATP synthase produces ATP from ADP in the presence of a proton or sodium gradient. F-type ATPases consist of two structural domains, F(1) containing the extramembraneous catalytic core and F(0) containing the membrane proton channel, linked together by a central stalk and a peripheral stalk. During catalysis, ATP synthesis in the catalytic domain of F(1) is coupled via a rotary mechanism of the central stalk subunits to proton translocation. This protein is part of the stalk that links CF(0) to CF(1). It either transmits conformational changes from CF(0) to CF(1) or is implicated in proton conduction. The chain is ATP synthase subunit delta from Chloroherpeton thalassium (strain ATCC 35110 / GB-78).